Consider the following 170-residue polypeptide: Mitotic-spindle organizing protein 2B (170 aa).

Disordered stretches follow at residues 1-26 and 102-170; these read MSRG…SPDA and SADS…GSST. Residues 8–20 are compositionally biased toward low complexity; it reads GSQAMASSQAAGP. Polar residues predominate over residues 123-132; sequence PNPTTSTTQG. Positions 151-170 are enriched in low complexity; it reads SGSRMQKSSSSGKSSGGSST.

It belongs to the MOZART2 family. Part of the gamma-tubulin complex. Interacts with TUBG1.

The protein localises to the cytoplasm. Its subcellular location is the cytoskeleton. It is found in the microtubule organizing center. It localises to the centrosome. The protein resides in the spindle. The chain is Mitotic-spindle organizing protein 2B (mzt2b) from Xenopus tropicalis (Western clawed frog).